Here is a 147-residue protein sequence, read N- to C-terminus: Nucleoside diphosphate kinase (147 aa).

K9, F57, R85, T91, R102, and N112 together coordinate ATP. Residue H115 is the Pros-phosphohistidine intermediate of the active site.

This sequence belongs to the NDK family. In terms of assembly, homotetramer. The cofactor is Mg(2+).

The protein resides in the cytoplasm. The enzyme catalyses a 2'-deoxyribonucleoside 5'-diphosphate + ATP = a 2'-deoxyribonucleoside 5'-triphosphate + ADP. It catalyses the reaction a ribonucleoside 5'-diphosphate + ATP = a ribonucleoside 5'-triphosphate + ADP. Major role in the synthesis of nucleoside triphosphates other than ATP. The ATP gamma phosphate is transferred to the NDP beta phosphate via a ping-pong mechanism, using a phosphorylated active-site intermediate. The polypeptide is Nucleoside diphosphate kinase (Brevibacillus brevis (strain 47 / JCM 6285 / NBRC 100599)).